A 353-amino-acid polypeptide reads, in one-letter code: Phosphate acyltransferase (353 aa).

Belongs to the PlsX family. In terms of assembly, homodimer. Probably interacts with PlsY.

The protein localises to the cytoplasm. The enzyme catalyses a fatty acyl-[ACP] + phosphate = an acyl phosphate + holo-[ACP]. It functions in the pathway lipid metabolism; phospholipid metabolism. Catalyzes the reversible formation of acyl-phosphate (acyl-PO(4)) from acyl-[acyl-carrier-protein] (acyl-ACP). This enzyme utilizes acyl-ACP as fatty acyl donor, but not acyl-CoA. This is Phosphate acyltransferase from Ralstonia pickettii (strain 12J).